The chain runs to 702 residues: Arginine decarboxylase 1, chloroplastic (702 aa).

A chloroplast-targeting transit peptide spans 1–52; that stretch reads MPALAFVDTPIDTFSSIFTPSSVSTAVVDGSCHWSPSLSSSLYRIDGWGAPY. N6-(pyridoxal phosphate)lysine is present on Lys-136. Pyridoxal 5'-phosphate is bound by residues Ser-288, Gly-325, and 374 to 377; that span reads ESGR. 320 to 330 contributes to the substrate binding site; the sequence is IDIGGGLGIDY. 436–437 is a substrate binding site; that stretch reads YV. The active-site Proton donor; shared with dimeric partner is the Cys-524. Asp-525 contacts substrate. Position 565 (Tyr-565) interacts with pyridoxal 5'-phosphate.

It belongs to the Orn/Lys/Arg decarboxylase class-II family. SpeA subfamily. As to quaternary structure, homodimer. Only the dimer is catalytically active, as the active sites are constructed of residues from both monomers. May form a head-to-tail homodimer. Homodimer and heterodimer with ADC2. The cofactor is pyridoxal 5'-phosphate. Mg(2+) serves as cofactor.

The protein resides in the plastid. Its subcellular location is the chloroplast. It is found in the cytoplasm. It localises to the cytosol. It carries out the reaction L-arginine + H(+) = agmatine + CO2. It functions in the pathway amine and polyamine biosynthesis; agmatine biosynthesis; agmatine from L-arginine: step 1/1. In terms of biological role, required for the biosynthesis of putrescine. Catalyzes the first step of polyamine (PA) biosynthesis to produce putrescine from arginine. Is a minor contributor to basal arginine decarboxylase (ADC) activity and putrescine biosynthesis. Accumulation of putrescine plays a positive role in freezing tolerance. Production of polyamines is essential for normal seed development. Controls PA homeostasis which is crucial for normal plant growth and development. The protein is Arginine decarboxylase 1, chloroplastic of Arabidopsis thaliana (Mouse-ear cress).